The following is a 358-amino-acid chain: Uptake hydrogenase small subunit (358 aa).

The first 45 residues, 1–45 (MSDIETFYDVMRRQGITRRSFMKSVRSPQHVLGLGPSFVPKIGEA), serve as a signal peptide directing secretion. [4Fe-4S] cluster contacts are provided by C62, C65, C160, C194, H232, C235, C260, and C266. Positions 275, 294, and 297 each coordinate [3Fe-4S] cluster.

This sequence belongs to the [NiFe]/[NiFeSe] hydrogenase small subunit family. Heterodimer of a large and a small subunit. Requires [4Fe-4S] cluster as cofactor. [3Fe-4S] cluster is required as a cofactor.

It localises to the cell membrane. It catalyses the reaction H2 + A = AH2. Its function is as follows. This enzyme recycles the H(2) produced by nitrogenase to increase the production of ATP and to protect nitrogenase against inhibition or damage by O(2) under carbon- or phosphate-limited conditions. This is Uptake hydrogenase small subunit (hupA) from Rhodobacter capsulatus (Rhodopseudomonas capsulata).